The sequence spans 214 residues: UBX domain-containing protein 10 (214 aa).

Basic residues predominate over residues 1–13 (MHVTRPKSSKGRS). The tract at residues 1–79 (MHVTRPKSSK…AYDRPPEEPV (79 aa)) is disordered. A compositionally biased stretch (polar residues) spans 16–25 (MITNSSMIYT). Over residues 49-60 (SLRSRAILRRSS) the composition is skewed to low complexity. One can recognise a UBX domain in the interval 127 to 204 (PEESDLLLAI…GVLNKSVLCI (78 aa)).

The protein belongs to the UBXN10 family.

The protein resides in the cell projection. It is found in the cilium. In terms of biological role, required for ciliogenesis. Acts as a tethering factor that facilitates recruitment of vcp/p97 to the intraflagellar transport complex B (IFT-B) in cilia. The sequence is that of UBX domain-containing protein 10 from Danio rerio (Zebrafish).